The primary structure comprises 778 residues: Endonuclease MutS2 (778 aa).

328–335 (GPNTGGKT) is an ATP binding site. The 76-residue stretch at 702 to 777 (LDLRGKRYEE…GSGATIVTFK (76 aa)) folds into the Smr domain.

It belongs to the DNA mismatch repair MutS family. MutS2 subfamily. In terms of assembly, homodimer. Binds to stalled ribosomes, contacting rRNA.

Endonuclease that is involved in the suppression of homologous recombination and thus may have a key role in the control of bacterial genetic diversity. Functionally, acts as a ribosome collision sensor, splitting the ribosome into its 2 subunits. Detects stalled/collided 70S ribosomes which it binds and splits by an ATP-hydrolysis driven conformational change. Acts upstream of the ribosome quality control system (RQC), a ribosome-associated complex that mediates the extraction of incompletely synthesized nascent chains from stalled ribosomes and their subsequent degradation. Probably generates substrates for RQC. The chain is Endonuclease MutS2 from Streptococcus pneumoniae (strain CGSP14).